The primary structure comprises 639 residues: Extracellular metalloproteinase mep (639 aa).

Positions 1 to 16 (MHMLSFIGALALPVFV) are cleaved as a signal peptide. A propeptide spanning residues 17 to 245 (CAQSCEPASL…IHGVVDYISE (229 aa)) is cleaved from the precursor. Residues Asn-287, Asn-320, Asn-336, and Asn-368 are each glycosylated (N-linked (GlcNAc...) asparagine). His-429 is a Zn(2+) binding site. The active site involves Glu-430. His-433 lines the Zn(2+) pocket. N-linked (GlcNAc...) asparagine glycosylation occurs at Asn-509.

Belongs to the peptidase M36 family. Zn(2+) is required as a cofactor.

It is found in the secreted. Its function is as follows. Secreted metalloproteinase that allows assimilation of proteinaceous substrates. In Aspergillus flavus (strain ATCC 200026 / FGSC A1120 / IAM 13836 / NRRL 3357 / JCM 12722 / SRRC 167), this protein is Extracellular metalloproteinase mep (mep).